A 159-amino-acid polypeptide reads, in one-letter code: UPF0225 protein plu2503 (159 aa).

This sequence belongs to the UPF0225 family.

The chain is UPF0225 protein plu2503 from Photorhabdus laumondii subsp. laumondii (strain DSM 15139 / CIP 105565 / TT01) (Photorhabdus luminescens subsp. laumondii).